The following is a 2262-amino-acid chain: Protein Ycf2 (2262 aa).

1607 to 1614 is a binding site for ATP; the sequence is GFIGTGRS.

It belongs to the Ycf2 family.

It localises to the plastid. Its subcellular location is the chloroplast stroma. Probable ATPase of unknown function. Its presence in a non-photosynthetic plant (Epifagus virginiana) and experiments in tobacco indicate that it has an essential function which is probably not related to photosynthesis. This Nuphar advena (Common spatterdock) protein is Protein Ycf2.